Consider the following 1455-residue polypeptide: Nik-related protein kinase (1455 aa).

A Protein kinase domain is found at 25-313; sequence FSLDKAIGLG…SGNMLLHPFV (289 aa). ATP contacts are provided by residues 31-39 and lysine 54; that span reads IGLGTYGRI. Catalysis depends on aspartate 177, which acts as the Proton acceptor. Disordered regions lie at residues 385–404 and 471–568; these read LHGE…PQDQ and TQDN…EDKE. Polar residues predominate over residues 471 to 480; sequence TQDNKATSPE. The span at 494 to 505 shows a compositional bias: basic and acidic residues; sequence EALETEQPKDLD. Residues 520 to 531 are compositionally biased toward low complexity; sequence QPRQGQAAEQQQ. Positions 540 to 568 are enriched in acidic residues; that stretch reads PPEEDREPEQAEVQEEAVEPPQAEIEDKE. Residues 716 to 750 adopt a coiled-coil conformation; it reads RRRHRRWEDIFNQHEEQLRRVENDREDDSSDNDEV. 2 disordered regions span residues 760 to 854 and 1029 to 1080; these read IEPH…PPYS and AFGN…TETS. A phosphoserine mark is found at serine 847 and serine 850. Residues 1029–1038 are compositionally biased toward low complexity; the sequence is AFGNHGANRG. A compositionally biased stretch (basic and acidic residues) spans 1044–1078; the sequence is RNREANGRNEENGAFGRDQHVFPEFEHEESDRGTE. The 288-residue stretch at 1138–1425 folds into the CNH domain; it reads SSEVYCGSLW…RFLCARGDKM (288 aa).

The protein belongs to the protein kinase superfamily. STE Ser/Thr protein kinase family. STE20 subfamily.

It carries out the reaction L-seryl-[protein] + ATP = O-phospho-L-seryl-[protein] + ADP + H(+). The enzyme catalyses L-threonyl-[protein] + ATP = O-phospho-L-threonyl-[protein] + ADP + H(+). Its function is as follows. May phosphorylate cofilin-1 and induce actin polymerization through this process, during the late stages of embryogenesis. Involved in the TNF-alpha-induced signaling pathway. This is Nik-related protein kinase (Nrk) from Mus musculus (Mouse).